A 270-amino-acid polypeptide reads, in one-letter code: Malonyl-[acyl-carrier protein] O-methyltransferase (270 aa).

It belongs to the methyltransferase superfamily.

It catalyses the reaction malonyl-[ACP] + S-adenosyl-L-methionine = malonyl-[ACP] methyl ester + S-adenosyl-L-homocysteine. Its pathway is cofactor biosynthesis; biotin biosynthesis. Its function is as follows. Converts the free carboxyl group of a malonyl-thioester to its methyl ester by transfer of a methyl group from S-adenosyl-L-methionine (SAM). It allows to synthesize pimeloyl-ACP via the fatty acid synthetic pathway. This Marinomonas sp. (strain MWYL1) protein is Malonyl-[acyl-carrier protein] O-methyltransferase.